Consider the following 218-residue polypeptide: LexA repressor (218 aa).

The H-T-H motif DNA-binding region spans 28 to 48; sequence RAEIAAEFGFSSPNSAEEHLR. Catalysis depends on for autocatalytic cleavage activity residues Ser-136 and Lys-173.

The protein belongs to the peptidase S24 family. Homodimer.

The enzyme catalyses Hydrolysis of Ala-|-Gly bond in repressor LexA.. Functionally, represses a number of genes involved in the response to DNA damage (SOS response), including recA and lexA. In the presence of single-stranded DNA, RecA interacts with LexA causing an autocatalytic cleavage which disrupts the DNA-binding part of LexA, leading to derepression of the SOS regulon and eventually DNA repair. This Cupriavidus metallidurans (strain ATCC 43123 / DSM 2839 / NBRC 102507 / CH34) (Ralstonia metallidurans) protein is LexA repressor.